The chain runs to 442 residues: MSEMTPREIVHELDAHIIGQQKAKRSVAVALRNRWRRMQLDADFRQEVTPKNILMIGPTGVGKTEIARRLAKLANAPFIKVEATKFTEVGYVGKEVEQIIRDLTDIAIKLTREQQMGKCRQRAEEHAEERILDALLPKPKNDWESTETDSSSNTRQVFRKKLREGQLDDKEIDIDVAQPQIGVEIMSPPGMEEMTNQLQSLFKNMGQAPAKRRKMKIKEAFKLLIEEEAAKLVNQEDLKEQAIEMVEQHGIVFLDEIDKICKRGETSGPDVSREGVQRDLLPLVEGCTVTTKHGMVKTDHILFIASGAFQMSKPSDLIPELQGRLPIRVELDALSADDFKRILTEPHASLTEQYIALMNTEGVKVEFSESGIDSIAKAAWQVNERTENIGARRLHTVMEKLMEDISYEASEKSGSAFVIDADYVSAHLDNLVQDEDLSRFIL.

ATP contacts are provided by residues Ile-18 and 60-65 (GVGKTE). Residues 136–157 (LPKPKNDWESTETDSSSNTRQV) form a disordered region. ATP contacts are provided by Asp-255, Glu-320, and Arg-392.

This sequence belongs to the ClpX chaperone family. HslU subfamily. A double ring-shaped homohexamer of HslV is capped on each side by a ring-shaped HslU homohexamer. The assembly of the HslU/HslV complex is dependent on binding of ATP.

The protein localises to the cytoplasm. Functionally, ATPase subunit of a proteasome-like degradation complex; this subunit has chaperone activity. The binding of ATP and its subsequent hydrolysis by HslU are essential for unfolding of protein substrates subsequently hydrolyzed by HslV. HslU recognizes the N-terminal part of its protein substrates and unfolds these before they are guided to HslV for hydrolysis. The sequence is that of ATP-dependent protease ATPase subunit HslU from Shewanella baltica (strain OS185).